The following is a 97-amino-acid chain: MNIRPLHDRVIVKRKEVESKSAGGIVLTGSAAGKSTRGEVLAIGHGRILENGEVKPLDVKVGDIVIFNDGYGVKAEKIDNEEVLIMSESDILAIVEA.

This sequence belongs to the GroES chaperonin family. Heptamer of 7 subunits arranged in a ring. Interacts with the chaperonin GroEL.

It localises to the cytoplasm. Functionally, together with the chaperonin GroEL, plays an essential role in assisting protein folding. The GroEL-GroES system forms a nano-cage that allows encapsulation of the non-native substrate proteins and provides a physical environment optimized to promote and accelerate protein folding. GroES binds to the apical surface of the GroEL ring, thereby capping the opening of the GroEL channel. This chain is Co-chaperonin GroES, found in Pectobacterium atrosepticum (strain SCRI 1043 / ATCC BAA-672) (Erwinia carotovora subsp. atroseptica).